The primary structure comprises 62 residues: Bacteriocin piscicolin-126 (62 aa).

The propeptide occupies 1–18 (MKTVKELSVKEMQLTTGG). A disulfide bridge links Cys27 with Cys32.

It localises to the secreted. Its function is as follows. Inhibits the growth of several Gram-positive bacteria, especially the food-borne pathogen L.monocytogenes, but has no effect on the growth of a number of yeasts and Gram-negative bacteria. The chain is Bacteriocin piscicolin-126 (pisA) from Carnobacterium maltaromaticum (Carnobacterium piscicola).